The sequence spans 446 residues: Neuropeptide Y receptor type 5 (446 aa).

Residues 1–42 (MDLELQDFYNKTLATENNTAATRNSDFPVWDDYKSSVDDLQY) lie on the Extracellular side of the membrane. Residues asparagine 10 and asparagine 17 are each glycosylated (N-linked (GlcNAc...) asparagine). A helical membrane pass occupies residues 43-63 (FLIGLYTFVSLLGFMGNLLIL). Topologically, residues 64 to 77 (MALMRKRNQKTMVN) are cytoplasmic. A helical transmembrane segment spans residues 78–98 (FLIGNLAFSDILVVLFCSPFT). Residues 99 to 117 (LTSVLLDQWMFGKVMCHIM) lie on the Extracellular side of the membrane. The cysteines at positions 114 and 198 are disulfide-linked. A helical membrane pass occupies residues 118 to 138 (PFLQCVSVLVSTLILISIAIV). At 139–156 (RYHMIKHPISNNLTANHG) the chain is on the cytoplasmic side. Residues 157–177 (YFLIATVWTLGFAICSPLPVF) traverse the membrane as a helical segment. Residues 178–208 (HSLVELQETFDSALLSSRYLCVESWPSDSYR) lie on the Extracellular side of the membrane. Residues 209-229 (IAFTISLLLVQYILPLVCLTV) traverse the membrane as a helical segment. The Cytoplasmic segment spans residues 230–369 (SHTSVCRSIS…KKRSRSVFYR (140 aa)). Residues 370-390 (LTILILVFAVSWMPLHLFHVV) form a helical membrane-spanning segment. Residues 391-407 (TDFNDNLISNRHFKLVY) are Extracellular-facing. Residues 408 to 428 (CICHLLGMMSCCLNPILYGFL) form a helical membrane-spanning segment. Topologically, residues 429-446 (NNGIKADLISLIQCLHMS) are cytoplasmic. Cysteine 442 carries the S-palmitoyl cysteine lipid modification.

Belongs to the G-protein coupled receptor 1 family.

It localises to the cell membrane. Functionally, receptor for neuropeptide Y and peptide YY. The activity of this receptor is mediated by G proteins that inhibit adenylate cyclase activity. Seems to be associated with food intake. Could be involved in feeding disorders. In Canis lupus familiaris (Dog), this protein is Neuropeptide Y receptor type 5 (NPY5R).